The sequence spans 218 residues: MKDVIKDLSELRMSYEKGELHEAQVDTHPHEQFLQWFNHALQSNLHEPYAMSLATCNRQGRPHVRTVLLRGATAQGYDFYTNYDSQKGIDLAENPYAELLFYWPSLERQVRIGGIVNKISEHESTDYYHKRPRDSQIAAHISTPQSGIIANREELQQRFNRLYEQVGQQTVLSKPEFWGGYRLQADYYEFWQGRPNRLHDRLSYQNTDGTWVVQRLMP.

Substrate is bound by residues 12–15 and arginine 70; that span reads RMSY. FMN is bound by residues 65 to 70, 80 to 81, lysine 87, and glutamine 109; these read RTVLLR and YT. 3 residues coordinate substrate: tyrosine 127, arginine 131, and serine 135. FMN contacts are provided by residues 145–146 and tryptophan 191; that span reads QS. A substrate-binding site is contributed by 197 to 199; that stretch reads RLH. Residue arginine 201 coordinates FMN.

Belongs to the pyridoxamine 5'-phosphate oxidase family. In terms of assembly, homodimer. Requires FMN as cofactor.

It carries out the reaction pyridoxamine 5'-phosphate + O2 + H2O = pyridoxal 5'-phosphate + H2O2 + NH4(+). The enzyme catalyses pyridoxine 5'-phosphate + O2 = pyridoxal 5'-phosphate + H2O2. Its pathway is cofactor metabolism; pyridoxal 5'-phosphate salvage; pyridoxal 5'-phosphate from pyridoxamine 5'-phosphate: step 1/1. It participates in cofactor metabolism; pyridoxal 5'-phosphate salvage; pyridoxal 5'-phosphate from pyridoxine 5'-phosphate: step 1/1. Catalyzes the oxidation of either pyridoxine 5'-phosphate (PNP) or pyridoxamine 5'-phosphate (PMP) into pyridoxal 5'-phosphate (PLP). The polypeptide is Pyridoxine/pyridoxamine 5'-phosphate oxidase (Acinetobacter baylyi (strain ATCC 33305 / BD413 / ADP1)).